A 365-amino-acid polypeptide reads, in one-letter code: Delta(7)-sterol 5(6)-desaturase ERG3 (365 aa).

At 1 to 92 the chain is on the cytoplasmic side; sequence MDLVLEVADH…LLPRSSILRE (92 aa). Residues 93-113 form a helical membrane-spanning segment; sequence FLSLWVIVTIFGLLLYLFTAS. Residues 114-140 are Lumenal-facing; it reads LSYVFVFDKSIFNHPRYLKNQMAMEIK. The chain crosses the membrane as a helical span at residues 141–161; that stretch reads LAVSAIPWMSMLTVPWFVMEL. Topologically, residues 162–242 are cytoplasmic; it reads NGHSKLYMKI…VDGFLQSISY (81 aa). Residues 187-311 enclose the Fatty acid hydroxylase domain; sequence TFIFFTDCGV…FTTLWDRLGG (125 aa). The Histidine box-1 motif lies at 200–204; the sequence is HRWLH. A Histidine box-2 motif is present at residues 213 to 217; sequence HKPHH. A helical membrane pass occupies residues 243–263; the sequence is HIYPLILPLHKVSYLILFTFV. Over 264–365 the chain is Lumenal; it reads NFWTVMIHDG…ENDPNTKKNN (102 aa). Positions 288-292 match the Histidine box-3 motif; that stretch reads HTVHH. Glycyl lysine isopeptide (Lys-Gly) (interchain with G-Cter in ubiquitin) cross-links involve residues Lys324 and Lys344.

Belongs to the sterol desaturase family. In terms of assembly, interacts with ERG28. Requires Fe cation as cofactor.

The protein resides in the endoplasmic reticulum membrane. It catalyses the reaction episterol + 2 Fe(II)-[cytochrome b5] + O2 + 2 H(+) = 5-dehydroepisterol + 2 Fe(III)-[cytochrome b5] + 2 H2O. It functions in the pathway steroid metabolism; ergosterol biosynthesis; ergosterol from zymosterol: step 3/5. In terms of biological role, C-5 sterol desaturase; part of the third module of ergosterol biosynthesis pathway that includes the late steps of the pathway. ERG3 catalyzes the introduction of a C-5 double bond in the B ring to produce 5-dehydroepisterol. The third module or late pathway involves the ergosterol synthesis itself through consecutive reactions that mainly occur in the endoplasmic reticulum (ER) membrane. Firstly, the squalene synthase ERG9 catalyzes the condensation of 2 farnesyl pyrophosphate moieties to form squalene, which is the precursor of all steroids. Squalene synthase is crucial for balancing the incorporation of farnesyl diphosphate (FPP) into sterol and nonsterol isoprene synthesis. Secondly, the squalene epoxidase ERG1 catalyzes the stereospecific oxidation of squalene to (S)-2,3-epoxysqualene, which is considered to be a rate-limiting enzyme in steroid biosynthesis. Then, the lanosterol synthase ERG7 catalyzes the cyclization of (S)-2,3 oxidosqualene to lanosterol, a reaction that forms the sterol core. In the next steps, lanosterol is transformed to zymosterol through a complex process involving various demethylation, reduction and desaturation reactions. The lanosterol 14-alpha-demethylase ERG11 (also known as CYP51) catalyzes C14-demethylation of lanosterol to produce 4,4'-dimethyl cholesta-8,14,24-triene-3-beta-ol, which is critical for ergosterol biosynthesis. The C-14 reductase ERG24 reduces the C14=C15 double bond of 4,4-dimethyl-cholesta-8,14,24-trienol to produce 4,4-dimethyl-cholesta-8,24-dienol. 4,4-dimethyl-cholesta-8,24-dienol is substrate of the C-4 demethylation complex ERG25-ERG26-ERG27 in which ERG25 catalyzes the three-step monooxygenation required for the demethylation of 4,4-dimethyl and 4alpha-methylsterols, ERG26 catalyzes the oxidative decarboxylation that results in a reduction of the 3-beta-hydroxy group at the C-3 carbon to an oxo group, and ERG27 is responsible for the reduction of the keto group on the C-3. ERG28 has a role as a scaffold to help anchor ERG25, ERG26 and ERG27 to the endoplasmic reticulum and ERG29 regulates the activity of the iron-containing C4-methylsterol oxidase ERG25. Then, the sterol 24-C-methyltransferase ERG6 catalyzes the methyl transfer from S-adenosyl-methionine to the C-24 of zymosterol to form fecosterol. The C-8 sterol isomerase ERG2 catalyzes the reaction which results in unsaturation at C-7 in the B ring of sterols and thus converts fecosterol to episterol. The sterol-C5-desaturase ERG3 then catalyzes the introduction of a C-5 double bond in the B ring to produce 5-dehydroepisterol. The C-22 sterol desaturase ERG5 further converts 5-dehydroepisterol into ergosta-5,7,22,24(28)-tetraen-3beta-ol by forming the C-22(23) double bond in the sterol side chain. Finally, ergosta-5,7,22,24(28)-tetraen-3beta-ol is substrate of the C-24(28) sterol reductase ERG4 to produce ergosterol. This chain is Delta(7)-sterol 5(6)-desaturase ERG3, found in Saccharomyces cerevisiae (strain ATCC 204508 / S288c) (Baker's yeast).